Here is a 688-residue protein sequence, read N- to C-terminus: Methionine--tRNA ligase (688 aa).

Residues 13 to 23 (PYANGNFHIGH) carry the 'HIGH' region motif. Zn(2+)-binding residues include Cys-144, Cys-147, Cys-157, and Cys-160. The short motif at 342 to 346 (KMSKS) is the 'KMSKS' region element. Position 345 (Lys-345) interacts with ATP. The 107-residue stretch at 582-688 (DFAKVDLRIA…PGAQPGMRIH (107 aa)) folds into the tRNA-binding domain.

It belongs to the class-I aminoacyl-tRNA synthetase family. MetG type 1 subfamily. Homodimer. Zn(2+) serves as cofactor.

Its subcellular location is the cytoplasm. The catalysed reaction is tRNA(Met) + L-methionine + ATP = L-methionyl-tRNA(Met) + AMP + diphosphate. Is required not only for elongation of protein synthesis but also for the initiation of all mRNA translation through initiator tRNA(fMet) aminoacylation. This Acidovorax ebreus (strain TPSY) (Diaphorobacter sp. (strain TPSY)) protein is Methionine--tRNA ligase.